Here is a 291-residue protein sequence, read N- to C-terminus: Hydroxysteroid 11-beta-dehydrogenase 1-like protein A (291 aa).

A signal peptide spans Met1 to Tyr18. NADP(+) is bound by residues Gly40 to Arg66, Asp91 to Met92, and Asn118 to Ile120. Residue Ser170 coordinates substrate. Tyr183 functions as the Proton acceptor in the catalytic mechanism. NADP(+) contacts are provided by residues Tyr183–Lys187 and Gly216–Asn222.

It belongs to the short-chain dehydrogenases/reductases (SDR) family.

It is found in the secreted. The catalysed reaction is cortisone + NADPH + H(+) = cortisol + NADP(+). Functionally, unidirectional NADP(+)-dependent cortisol dehydrogenase (in vitro). In Xenopus laevis (African clawed frog), this protein is Hydroxysteroid 11-beta-dehydrogenase 1-like protein A (hsd11b1l-a).